The following is a 566-amino-acid chain: Endoglucanase B (566 aa).

The N-terminal stretch at 1–30 is a signal peptide; the sequence is MKKRRSSKVILSLAIVVALLAAVEPNAALA. E177 functions as the Proton donor in the catalytic mechanism. E299 functions as the Nucleophile in the catalytic mechanism.

It belongs to the glycosyl hydrolase 5 (cellulase A) family.

The catalysed reaction is Endohydrolysis of (1-&gt;4)-beta-D-glucosidic linkages in cellulose, lichenin and cereal beta-D-glucans.. This chain is Endoglucanase B (celB), found in Paenibacillus lautus (Bacillus lautus).